Here is a 1733-residue protein sequence, read N- to C-terminus: Gag-Pol polyprotein (1733 aa).

A lipid anchor (N-myristoyl glycine; by host) is attached at Gly2. Residues 109 to 112 (PSAP) carry the PTAP/PSAP motif motif. Residues 112–121 (PSLLPEPPLS) show a composition bias toward pro residues. 2 disordered regions span residues 112–196 (PSLL…ASRL) and 202–221 (LPVADSTTSQAFPLRSGGNG). The LYPX(n)L motif motif lies at 128 to 132 (LYPAL). Over residues 159–170 (DPPPYRDPGPPP) the composition is skewed to pro residues. The short motif at 160 to 163 (PPPY) is the PPXY motif element. Ser190 bears the Phosphoserine; by host mark. Residues 343 to 391 (GRSPTNLAKVKGITQGPNESPSAFLERLKEAYRRYTPYDPEDPGQETNV) form an interaction with host PIAS4 region. The tract at residues 428–433 (IFNKRE) is interaction with host UBE2I. 2 stretches are compositionally biased toward basic and acidic residues: residues 432-464 (RETPEEREERIKRETEEKEERRRAEDEQKEKER) and 484-496 (KQDRQGGERRRPQ). Disordered regions lie at residues 432–496 (RETP…RRPQ) and 511–550 (WAKDCPKKPRGPRGPRPQTSLLALDDQGGRGQEPPPEPRI). Residues 436 to 476 (EEREERIKRETEEKEERRRAEDEQKEKERDRRRHREMSKLL) are a coiled coil. The CCHC-type zinc-finger motif lies at 500–517 (DQCAYCKEKGHWAKDCPK). Positions 559 to 629 (VTFLVDTGAQ…CPYPLLGRDL (71 aa)) constitute a Peptidase A2 domain. Asp564 (protease; shared with dimeric partner) is an active-site residue. Residues 739 to 930 (LDQGILVPCQ…KQVKYLGYLL (192 aa)) enclose the Reverse transcriptase domain. Residues Asp807, Asp881, Asp882, Asp1181, Glu1219, Asp1240, and Asp1310 each coordinate Mg(2+). The 147-residue stretch at 1172–1318 (PDADHTWYTD…ADQAAREVAT (147 aa)) folds into the RNase H type-1 domain. The HHCC-type zinc-finger motif lies at 1385–1425 (HQLTHLSFSKTKALLERSPSPYYMLNRDRTLKNITETCKAC). Residues 1442–1600 (RGHRPGTHWE…TPYEILYGAP (159 aa)) form the Integrase catalytic domain. Mg(2+) contacts are provided by Asp1453 and Asp1512.

As to quaternary structure, homohexamer; further associates as homomultimer. The virus core is composed of a lattice formed from hexagonal rings, each containing six capsid monomers. Interacts with mouse UBE2I and mouse PIAS4. Interacts (via PPXY motif) with host NEDD4. Interacts (via PSAP motif) with host TSG101. Interacts (via LYPX(n)L motif) with host PDCD6IP. In terms of assembly, the reverse transcriptase is a monomer (Potential). Interacts (via RNase domains) with host release factor ETF1; this interaction is essential for translational readthrough of amber codon between viral gag and pol genes, as well as for viral replication. As to quaternary structure, homodimer. Mg(2+) is required as a cofactor. In terms of processing, ubiquitinated by ITCH. Gag can recruit the ubiquitin ligase Itch in an L domain-independent manner to facilitate virus release via a mechanism that involves Gag ubiquitination. Specific enzymatic cleavages by the viral protease yield mature proteins. The protease is released by autocatalytic cleavage. The polyprotein is cleaved during and after budding, this process is termed maturation. Post-translationally, sumoylated; which is required for virus replication. In terms of processing, phosphorylated on serine residues.

Its subcellular location is the virion. It is found in the host cell membrane. The protein localises to the host late endosome membrane. It localises to the host endosome. The protein resides in the host multivesicular body. Its subcellular location is the host cytoplasm. The catalysed reaction is DNA(n) + a 2'-deoxyribonucleoside 5'-triphosphate = DNA(n+1) + diphosphate. It carries out the reaction Endonucleolytic cleavage to 5'-phosphomonoester.. Its activity is regulated as follows. Most efficiently inhibited by Amprenavir, which is able to block Gag-Pol processing in infected cells. In terms of biological role, plays a role in budding and is processed by the viral protease during virion maturation outside the cell. During budding, it recruits, in a PPXY-dependent or independent manner, Nedd4-like ubiquitin ligases that conjugate ubiquitin molecules to Gag-Pol, or to Gag-Pol binding host factors. Interaction with HECT ubiquitin ligases probably links the viral protein to the host ESCRT pathway and facilitates release. Its function is as follows. Targets Gag and gag-pol polyproteins to the plasma membrane via a multipartite membrane binding signal, that includes its myristoylated N-terminus. Also mediates nuclear localization of the pre-integration complex. Functionally, constituent of the pre-integration complex (PIC) which tethers the latter to mitotic chromosomes. This allows the integration of the viral genome into the host DNA. Forms the spherical core of the virion that encapsulates the genomic RNA-nucleocapsid complex. In terms of biological role, involved in the packaging and encapsidation of two copies of the genome. Binds with high affinity to conserved UCUG elements within the packaging signal, located near the 5'-end of the genome. This binding is dependent on genome dimerization. Acts as a nucleic acid chaperone which is involved in rearrangement of nucleic acid secondary structures during gRNA retrotranscription. Its function is as follows. The aspartyl protease mediates proteolytic cleavages of Gag and Gag-Pol polyproteins during or shortly after the release of the virion from the plasma membrane. Cleavages take place as an ordered, step-wise cascade to yield mature proteins. This process is called maturation. Displays maximal activity during the budding process just prior to particle release from the cell (Potential). Cleaves the translation initiation factor eIF4G leading to the inhibition of host cap-dependent translation. Functionally, RT is a multifunctional enzyme that converts the viral dimeric RNA genome into dsDNA in the cytoplasm, shortly after virus entry into the cell. This enzyme displays a DNA polymerase activity that can copy either DNA or RNA templates, and a ribonuclease H (RNase H) activity that cleaves the RNA strand of RNA-DNA heteroduplexes in a partially processive 3' to 5' endonucleasic mode. Conversion of viral genomic RNA into dsDNA requires many steps. A tRNA binds to the primer-binding site (PBS) situated at the 5' end of the viral RNA. RT uses the 3' end of the tRNA primer to perform a short round of RNA-dependent minus-strand DNA synthesis. The reading proceeds through the U5 region and ends after the repeated (R) region which is present at both ends of viral RNA. The portion of the RNA-DNA heteroduplex is digested by the RNase H, resulting in a ssDNA product attached to the tRNA primer. This ssDNA/tRNA hybridizes with the identical R region situated at the 3' end of viral RNA. This template exchange, known as minus-strand DNA strong stop transfer, can be either intra- or intermolecular. RT uses the 3' end of this newly synthesized short ssDNA to perform the RNA-dependent minus-strand DNA synthesis of the whole template. RNase H digests the RNA template except for a polypurine tract (PPT) situated at the 5' end of the genome. It is not clear if both polymerase and RNase H activities are simultaneous. RNase H probably can proceed both in a polymerase-dependent (RNA cut into small fragments by the same RT performing DNA synthesis) and a polymerase-independent mode (cleavage of remaining RNA fragments by free RTs). Secondly, RT performs DNA-directed plus-strand DNA synthesis using the PPT that has not been removed by RNase H as primers. PPT and tRNA primers are then removed by RNase H. The 3' and 5' ssDNA PBS regions hybridize to form a circular dsDNA intermediate. Strand displacement synthesis by RT to the PBS and PPT ends produces a blunt ended, linear dsDNA copy of the viral genome that includes long terminal repeats (LTRs) at both ends. Catalyzes viral DNA integration into the host chromosome, by performing a series of DNA cutting and joining reactions. This enzyme activity takes place after virion entry into a cell and reverse transcription of the RNA genome in dsDNA. The first step in the integration process is 3' processing. This step requires a complex comprising the viral genome, matrix protein and integrase. This complex is called the pre-integration complex (PIC). The integrase protein removes 2 nucleotides from each 3' end of the viral DNA, leaving recessed CA OH's at the 3' ends. In the second step that requires cell division, the PIC enters cell nucleus. In the third step, termed strand transfer, the integrase protein joins the previously processed 3' ends to the 5' ends of strands of target cellular DNA at the site of integration. The last step is viral DNA integration into host chromosome. In Cas-Br-E murine leukemia virus, this protein is Gag-Pol polyprotein (gag-pol).